Here is a 344-residue protein sequence, read N- to C-terminus: MIKVGIVGGTGYTGVELLRLLAQHPQAEVAVITSRSEAGVAVADMYPNLRGHYDGLAFSVPDSKALGACDVVFFATPHGVAHALAGELLAAGTKVIDLSADFRLQDAVEWGKWYGQPHGAPELLKDAVYGLPEVNREKIRQARLIAVPGCYPTATQLGFLPLLEAGLADASRLIADCKSGVSGAGRGAAVGSLFCEAGESMKAYAVKGHRHLPEISQGLRLAAGKDIGLTFVPHLTPMIRGIHATLYANVVDTSVDLQALFEKRYADEPFVDVMPAGSHPETRSVRGANVCRIAVHRPQGGDLVVVLSVIDNLVKGASGQAVQNLNILFGLDERMGLSHAGLLP.

The active site involves Cys-150.

Belongs to the NAGSA dehydrogenase family. Type 1 subfamily.

It localises to the cytoplasm. The enzyme catalyses N-acetyl-L-glutamate 5-semialdehyde + phosphate + NADP(+) = N-acetyl-L-glutamyl 5-phosphate + NADPH + H(+). Its pathway is amino-acid biosynthesis; L-arginine biosynthesis; N(2)-acetyl-L-ornithine from L-glutamate: step 3/4. Catalyzes the NADPH-dependent reduction of N-acetyl-5-glutamyl phosphate to yield N-acetyl-L-glutamate 5-semialdehyde. This chain is N-acetyl-gamma-glutamyl-phosphate reductase, found in Pseudomonas putida (strain ATCC 700007 / DSM 6899 / JCM 31910 / BCRC 17059 / LMG 24140 / F1).